Here is a 443-residue protein sequence, read N- to C-terminus: Ribulose bisphosphate carboxylase large chain (443 aa).

An N6,N6,N6-trimethyllysine modification is found at Lys-7. Residues Asn-116 and Thr-166 each contribute to the substrate site. Lys-168 (proton acceptor) is an active-site residue. Lys-170 lines the substrate pocket. Residues Lys-194, Asp-196, and Glu-197 each contribute to the Mg(2+) site. N6-carboxylysine is present on Lys-194. Residue His-287 is the Proton acceptor of the active site. Substrate is bound by residues Arg-288, His-320, and Ser-372.

Belongs to the RuBisCO large chain family. Type I subfamily. In terms of assembly, heterohexadecamer of 8 large chains and 8 small chains; disulfide-linked. The disulfide link is formed within the large subunit homodimers. Mg(2+) is required as a cofactor. In terms of processing, the disulfide bond which can form in the large chain dimeric partners within the hexadecamer appears to be associated with oxidative stress and protein turnover.

The protein resides in the plastid. Its subcellular location is the chloroplast. The enzyme catalyses 2 (2R)-3-phosphoglycerate + 2 H(+) = D-ribulose 1,5-bisphosphate + CO2 + H2O. It carries out the reaction D-ribulose 1,5-bisphosphate + O2 = 2-phosphoglycolate + (2R)-3-phosphoglycerate + 2 H(+). In terms of biological role, ruBisCO catalyzes two reactions: the carboxylation of D-ribulose 1,5-bisphosphate, the primary event in carbon dioxide fixation, as well as the oxidative fragmentation of the pentose substrate in the photorespiration process. Both reactions occur simultaneously and in competition at the same active site. This Abies homolepis (Nikko fir) protein is Ribulose bisphosphate carboxylase large chain.